The following is a 262-amino-acid chain: Putative hydro-lyase Sca_2211 (262 aa).

The protein belongs to the D-glutamate cyclase family.

This chain is Putative hydro-lyase Sca_2211, found in Staphylococcus carnosus (strain TM300).